The sequence spans 57 residues: Large ribosomal subunit protein bL32c (57 aa).

This sequence belongs to the bacterial ribosomal protein bL32 family.

The protein resides in the plastid. Its subcellular location is the chloroplast. The chain is Large ribosomal subunit protein bL32c from Drimys granadensis.